A 553-amino-acid polypeptide reads, in one-letter code: Putative transport protein YidE (553 aa).

Helical transmembrane passes span 4 to 24, 28 to 48, 65 to 85, 95 to 115, and 158 to 178; these read IALT…IGNV, GIGL…HFVS, FGLI…FFAS, LFAV…HKLF, and MSYA…MWML. 2 consecutive RCK C-terminal domains span residues 191–276 and 279–361; these read QQHE…VIGQ and DTSL…VLGN. A run of 5 helical transmembrane segments spans residues 371–391, 394–414, 439–459, 464–484, and 533–553; these read MLPV…PVFV, FPAA…LILG, IVLF…NTLV, LSWI…VGIL, and LVMF…WSIG.

Belongs to the AAE transporter (TC 2.A.81) family. YidE subfamily.

The protein resides in the cell membrane. The chain is Putative transport protein YidE from Shigella dysenteriae serotype 1 (strain Sd197).